Reading from the N-terminus, the 366-residue chain is tRNA/tmRNA (uracil-C(5))-methyltransferase (366 aa).

Positions 189, 217, 222, 238, and 298 each coordinate S-adenosyl-L-methionine. C323 serves as the catalytic Nucleophile. E357 (proton acceptor) is an active-site residue.

The protein belongs to the class I-like SAM-binding methyltransferase superfamily. RNA M5U methyltransferase family. TrmA subfamily.

It carries out the reaction uridine(54) in tRNA + S-adenosyl-L-methionine = 5-methyluridine(54) in tRNA + S-adenosyl-L-homocysteine + H(+). It catalyses the reaction uridine(341) in tmRNA + S-adenosyl-L-methionine = 5-methyluridine(341) in tmRNA + S-adenosyl-L-homocysteine + H(+). Its function is as follows. Dual-specificity methyltransferase that catalyzes the formation of 5-methyluridine at position 54 (m5U54) in all tRNAs, and that of position 341 (m5U341) in tmRNA (transfer-mRNA). This Idiomarina loihiensis (strain ATCC BAA-735 / DSM 15497 / L2-TR) protein is tRNA/tmRNA (uracil-C(5))-methyltransferase.